Here is a 130-residue protein sequence, read N- to C-terminus: Keratin, high-sulfur matrix protein, IIIA3A (130 aa).

As to expression, wool.

The keratin products of mammalian epidermal derivatives such as wool and hair consist of microfibrils embedded in a rigid matrix of other proteins. The matrix proteins include the high-sulfur and high-tyrosine keratins, having molecular weights of 6-20 kDa, whereas the microfibrils contain the larger, low-sulfur keratins (40-56 kDa). The sequence is that of Keratin, high-sulfur matrix protein, IIIA3A from Ovis aries (Sheep).